A 250-amino-acid polypeptide reads, in one-letter code: Developmental protein SEPALLATA 2 (250 aa).

The region spanning 3-57 (RGRVELKRIENKINRQVTFAKRRNGLLKKAYELSVLCDAEVSLIVFSNRGKLYEF) is the MADS-box domain. A coiled-coil region spans residues 85-150 (AKELENSYRE…CIKTQYMLDQ (66 aa)). Residues 88 to 178 (LENSYREYLK…SMKLEDMIGV (91 aa)) enclose the K-box domain.

As to quaternary structure, heterodimer with AGAMOUS capable of binding to CArG-box sequences. Interacts with TT16/AGL32.

It localises to the nucleus. In terms of biological role, probable transcription factor. Functions with SEPALLATA1/AGL2 and SEPALLATA3/AGL9 to ensure proper development of petals, stamens and carpels and to prevent the indeterminate growth of the flower meristem. Forms a heterodimer via the K-box domain with AG, that could be involved in genes regulation during floral meristem development. This is Developmental protein SEPALLATA 2 (SEP2) from Arabidopsis thaliana (Mouse-ear cress).